A 324-amino-acid polypeptide reads, in one-letter code: MITTLITHILNPLAFIVPVLLAVAFLTLLERKVLGYMQLRKGPNIVGPYGLLQPIADGVKLFIKEPVRPSTSSPILFILTPMLALTLAMTLWAPLPLPYPVLDLNLAILLFVALSSLAVYSILGSGWASNSKYALVGALRAVAQTISYEVSLGLILLSLIIFTGGFTLQTFNTAQESIWLIIPAWPLAAMWYISTLAETNRAPFDLTEGESELVSGFNVEYAGGPFALFFLAEYANILFMNTLSASLFLGASHIPMLPELTTMNLMTKAAVLSLVFLWVRASYPRFRYDQLMHLIWKNFLPLTLALVIWHLALPITFAGLPPQM.

The next 9 helical transmembrane spans lie at 9-29, 43-63, 75-95, 106-126, 146-166, 177-197, 228-250, 259-279, and 299-319; these read ILNP…LTLL, PNIV…KLFI, ILFI…WAPL, LAIL…LGSG, ISYE…TGGF, SIWL…STLA, LFFL…LFLG, ELTT…FLWV, and FLPL…TFAG.

Belongs to the complex I subunit 1 family.

Its subcellular location is the mitochondrion inner membrane. The enzyme catalyses a ubiquinone + NADH + 5 H(+)(in) = a ubiquinol + NAD(+) + 4 H(+)(out). Functionally, core subunit of the mitochondrial membrane respiratory chain NADH dehydrogenase (Complex I) that is believed to belong to the minimal assembly required for catalysis. Complex I functions in the transfer of electrons from NADH to the respiratory chain. The immediate electron acceptor for the enzyme is believed to be ubiquinone. This is NADH-ubiquinone oxidoreductase chain 1 (MT-ND1) from Tetraodon nigroviridis (Spotted green pufferfish).